We begin with the raw amino-acid sequence, 106 residues long: Urease subunit beta (106 aa).

Belongs to the urease beta subunit family. In terms of assembly, heterotrimer of UreA (gamma), UreB (beta) and UreC (alpha) subunits. Three heterotrimers associate to form the active enzyme.

Its subcellular location is the cytoplasm. The catalysed reaction is urea + 2 H2O + H(+) = hydrogencarbonate + 2 NH4(+). The protein operates within nitrogen metabolism; urea degradation; CO(2) and NH(3) from urea (urease route): step 1/1. The polypeptide is Urease subunit beta (Synechococcus sp. (strain WH7805)).